The sequence spans 668 residues: Protein PLASTID TRANSCRIPTIONALLY ACTIVE 10 (668 aa).

The N-terminal 40 residues, 1–40 (MQICQTKLNFTFPNPTNPNFCKPKALQWSPPRRISLLPCR), are a transit peptide targeting the chloroplast. In terms of domain architecture, S1 motif spans 272 to 340 (GMVCEGTVTT…YRFRFPLELR (69 aa)). A compositionally biased stretch (basic and acidic residues) spans 362–391 (RDGDTNPDEIRRDCGRPPEPRKDPGSKPEE). The disordered stretch occupies residues 362-394 (RDGDTNPDEIRRDCGRPPEPRKDPGSKPEEEGL). Residue Ser434 is modified to Phosphoserine. A disordered region spans residues 611–668 (KRKEGSTLASQEEETESEEEEEDDDDFDDFDYSILSDESSIGYSEQQPLVNGTQVLTD). Over residues 621–641 (QEEETESEEEEEDDDDFDDFD) the composition is skewed to acidic residues. Residues 646–668 (SDESSIGYSEQQPLVNGTQVLTD) are compositionally biased toward polar residues.

Component of the transcriptionally active chromosome (TAC) complexes. Interacts with PTAC7.

The protein localises to the plastid. Its subcellular location is the chloroplast. This is Protein PLASTID TRANSCRIPTIONALLY ACTIVE 10 from Arabidopsis thaliana (Mouse-ear cress).